A 301-amino-acid chain; its full sequence is MTLDRDAASHVAEVLSEALPYIRRFVGKTLVIKYGGNAMESEELKTGFARDIVLMKAVGINPVVVHGGGPQIGDLLKRLSIESHFIDGMRVTDSATMDVVEMVLGGQVNKDIVNLINRHGGSAIGLTGKDAELIRARKLTVSRQTPEMTTPEIIDIGHVGEVVSVNTDLLNMLVKGDFIPVIAPIGVGANGESYNINADLVAGKVAEALKAEKLMLLTNIAGLMDKQGQVLTGLTTEQVNELIADGTIYGGMLPKIRCALDAVQGGVNSSHIIDGRVPNAVLLEIFTDSGVGTLITNRKPR.

Substrate-binding positions include glycine 68–glycine 69, arginine 90, and asparagine 195.

Belongs to the acetylglutamate kinase family. ArgB subfamily.

It is found in the cytoplasm. It carries out the reaction N-acetyl-L-glutamate + ATP = N-acetyl-L-glutamyl 5-phosphate + ADP. The protein operates within amino-acid biosynthesis; L-arginine biosynthesis; N(2)-acetyl-L-ornithine from L-glutamate: step 2/4. Functionally, catalyzes the ATP-dependent phosphorylation of N-acetyl-L-glutamate. The chain is Acetylglutamate kinase from Pseudomonas putida (strain GB-1).